The sequence spans 897 residues: Protein SAP1 (897 aa).

5 disordered regions span residues 112-144 (EEPA…PVFQ), 195-219 (PSKP…PPLK), 302-398 (QMSD…TKST), 413-438 (SKSN…PNSV), and 456-561 (KKVA…REEP). The segment covering 120-137 (MPSSKTYTNHSSSFTRST) has biased composition (polar residues). Basic and acidic residues predominate over residues 209 to 219 (NPIEHNDPPLK). The segment covering 307–321 (SVTSSTSSNKSVSSS) has biased composition (low complexity). Over residues 364-380 (LETSTTMDSSKIRNPQI) the composition is skewed to polar residues. Residues 468-478 (KKSHPILKSKT) show a composition bias toward basic residues. Low complexity predominate over residues 480-496 (KVPNSSSKKTSSHPSRP). The segment covering 497-523 (VSNSKPYSHGASQNKKPSKNQTTSMSK) has biased composition (polar residues). A Phosphoserine modification is found at S536. Residue 645–652 (GPPGTGKT) participates in ATP binding.

The protein belongs to the AAA ATPase family. Interacts with SPT2/SIN1.

In Saccharomyces cerevisiae (strain ATCC 204508 / S288c) (Baker's yeast), this protein is Protein SAP1 (SAP1).